A 277-amino-acid chain; its full sequence is Phosphate import ATP-binding protein PstB 2 (277 aa).

Positions 31-272 constitute an ABC transporter domain; the sequence is IEVPGLSLFY…PAKKQTEDYI (242 aa). Residue 63-70 coordinates ATP; it reads GPSGCGKS.

The protein belongs to the ABC transporter superfamily. Phosphate importer (TC 3.A.1.7) family. In terms of assembly, the complex is composed of two ATP-binding proteins (PstB), two transmembrane proteins (PstC and PstA) and a solute-binding protein (PstS).

Its subcellular location is the cell inner membrane. It catalyses the reaction phosphate(out) + ATP + H2O = ADP + 2 phosphate(in) + H(+). In terms of biological role, part of the ABC transporter complex PstSACB involved in phosphate import. Responsible for energy coupling to the transport system. The polypeptide is Phosphate import ATP-binding protein PstB 2 (Pseudomonas syringae pv. tomato (strain ATCC BAA-871 / DC3000)).